An 86-amino-acid chain; its full sequence is MSKPILFYAETCPDTAPFVAELDRLGVDYDEVEIMTSLPNLKQFIRLRDSSAEFDNSKANGYLGIPALLLPNGDVVLDLSKLKVIF.

This is an uncharacterized protein from Haemophilus influenzae (strain ATCC 51907 / DSM 11121 / KW20 / Rd).